A 205-amino-acid polypeptide reads, in one-letter code: Large ribosomal subunit protein uL18 (205 aa).

The protein belongs to the universal ribosomal protein uL18 family. Part of the 50S ribosomal subunit. Contacts the 5S and 23S rRNAs.

Functionally, this is one of the proteins that bind and probably mediate the attachment of the 5S RNA into the large ribosomal subunit, where it forms part of the central protuberance. The sequence is that of Large ribosomal subunit protein uL18 from Pyrobaculum aerophilum (strain ATCC 51768 / DSM 7523 / JCM 9630 / CIP 104966 / NBRC 100827 / IM2).